A 35-amino-acid chain; its full sequence is Photosystem I reaction center subunit Z (35 aa).

Residues 10–30 (LVIITTLVVPFMAAAALLFII) traverse the membrane as a helical segment.

As to quaternary structure, the G.violaceus PSI reaction center is composed of one copy each of PsaA,B,C,D,E,F,L,M and Z, and forms trimeric complexes.

It localises to the cell inner membrane. This chain is Photosystem I reaction center subunit Z (psaZ), found in Gloeobacter violaceus (strain ATCC 29082 / PCC 7421).